The following is a 541-amino-acid chain: NADH-ubiquinone oxidoreductase chain 5 (541 aa).

The next 16 membrane-spanning stretches (helical) occupy residues L17–F37, T48–M70, F74–M94, G98–F118, I130–F150, Y157–T177, A191–Y213, G226–F246, L263–F283, H285–V305, S322–F342, S353–Y373, L404–G424, I429–L449, S455–G475, and F518–M538.

This sequence belongs to the complex I subunit 5 family.

The protein resides in the mitochondrion inner membrane. It catalyses the reaction a ubiquinone + NADH + 5 H(+)(in) = a ubiquinol + NAD(+) + 4 H(+)(out). In terms of biological role, core subunit of the mitochondrial membrane respiratory chain NADH dehydrogenase (Complex I) that is believed to belong to the minimal assembly required for catalysis. Complex I functions in the transfer of electrons from NADH to the respiratory chain. The immediate electron acceptor for the enzyme is believed to be ubiquinone. The chain is NADH-ubiquinone oxidoreductase chain 5 (ND5) from Artemia franciscana (Brine shrimp).